The following is a 1175-amino-acid chain: DNA-directed RNA polymerase subunit beta (1175 aa).

The disordered stretch occupies residues 12 to 33; the sequence is QSKTDRPQSSSNGSSSLNGSVP. Low complexity predominate over residues 20-31; sequence SSSNGSSSLNGS.

The protein belongs to the RNA polymerase beta chain family. In terms of assembly, the RNAP catalytic core consists of 2 alpha, 1 beta, 1 beta' and 1 omega subunit. When a sigma factor is associated with the core the holoenzyme is formed, which can initiate transcription.

The enzyme catalyses RNA(n) + a ribonucleoside 5'-triphosphate = RNA(n+1) + diphosphate. DNA-dependent RNA polymerase catalyzes the transcription of DNA into RNA using the four ribonucleoside triphosphates as substrates. This Mycobacterium avium (strain 104) protein is DNA-directed RNA polymerase subunit beta.